The following is a 470-amino-acid chain: AAA-ATPase At5g17730 (470 aa).

An N-terminal signal peptide occupies residues 1–18 (MFSLRNLPSLAPFVSAYA). Residue 252-259 (GPPGTGKT) participates in ATP binding.

The protein belongs to the AAA ATPase family. BCS1 subfamily. The cofactor is Mg(2+).

The enzyme catalyses ATP + H2O = ADP + phosphate + H(+). This Arabidopsis thaliana (Mouse-ear cress) protein is AAA-ATPase At5g17730.